The sequence spans 94 residues: Large ribosomal subunit protein bL27 (94 aa).

Residues 1 to 9 constitute a propeptide that is removed on maturation; the sequence is MLKMNLQFF.

It belongs to the bacterial ribosomal protein bL27 family. The N-terminus is cleaved by ribosomal processing cysteine protease Prp.

In Halalkalibacterium halodurans (strain ATCC BAA-125 / DSM 18197 / FERM 7344 / JCM 9153 / C-125) (Bacillus halodurans), this protein is Large ribosomal subunit protein bL27.